A 37-amino-acid chain; its full sequence is Large ribosomal subunit protein bL36 (37 aa).

It belongs to the bacterial ribosomal protein bL36 family.

This chain is Large ribosomal subunit protein bL36, found in Prochlorococcus marinus (strain MIT 9303).